The sequence spans 201 residues: Small ribosomal subunit protein uS4 (201 aa).

An S4 RNA-binding domain is found at 91 to 151 (ARLDNVIYRA…DRSRSMLWFD (61 aa)).

Belongs to the universal ribosomal protein uS4 family. In terms of assembly, part of the 30S ribosomal subunit. Contacts protein S5. The interaction surface between S4 and S5 is involved in control of translational fidelity.

Functionally, one of the primary rRNA binding proteins, it binds directly to 16S rRNA where it nucleates assembly of the body of the 30S subunit. In terms of biological role, with S5 and S12 plays an important role in translational accuracy. The sequence is that of Small ribosomal subunit protein uS4 from Corynebacterium urealyticum (strain ATCC 43042 / DSM 7109).